A 107-amino-acid chain; its full sequence is Large ribosomal subunit protein uL24 (107 aa).

It belongs to the universal ribosomal protein uL24 family. In terms of assembly, part of the 50S ribosomal subunit.

In terms of biological role, one of two assembly initiator proteins, it binds directly to the 5'-end of the 23S rRNA, where it nucleates assembly of the 50S subunit. Functionally, one of the proteins that surrounds the polypeptide exit tunnel on the outside of the subunit. The sequence is that of Large ribosomal subunit protein uL24 from Nitrosomonas eutropha (strain DSM 101675 / C91 / Nm57).